The chain runs to 419 residues: Phospholipase A1-IIgamma (419 aa).

Coiled-coil stretches lie at residues 1 to 21 (MKRK…EFAK) and 207 to 227 (NARD…KDEE). Ser-236 (acyl-ester intermediate) is an active-site residue. Active-site charge relay system residues include Ser-236, Asp-302, and His-339.

The protein belongs to the AB hydrolase superfamily. Lipase family. In terms of tissue distribution, expressed in seedlings, stems and siliques, and, to a lower extent, in flowers.

It localises to the cytoplasm. Acylhydrolase that catalyzes the hydrolysis of 1,3-diacylglycerol (1,3-DAG) and 1-monoacylglycerol (1-MAG) at the sn-1 position. High activity toward 1,3-DAG and 1-MAG, but low activity toward 1,2-diacylglycerol (1,2-DAG) and 1-lysophosphatidylcholine (1-LPC), and no activity toward phosphatidylcholine (PC), monogalactosyldiacylglycerol (MGDG), digalactosyldiacylglycerol (DGDG), triacylglycerol (TAG) and 2-monoacylglycerol (2-MAG). May be involved in the negative regulation of seedling establishment by inhibiting the breakdown, beta-oxidation and mobilization of seed storage oils. The chain is Phospholipase A1-IIgamma (DSEL) from Arabidopsis thaliana (Mouse-ear cress).